Reading from the N-terminus, the 300-residue chain is GTPase Era (300 aa).

The region spanning 8–176 (RCGYVAIVGR…ESLIASHLPE (169 aa)) is the Era-type G domain. A G1 region spans residues 16–23 (GRPNVGKS). GTP is bound at residue 16 to 23 (GRPNVGKS). Residues 42–46 (QTTRH) are G2. Positions 63 to 66 (DTPG) are G3. GTP contacts are provided by residues 63–67 (DTPGM) and 125–128 (NKTD). The segment at 125–128 (NKTD) is G4. Residues 155–157 (ISA) are G5. One can recognise a KH type-2 domain in the interval 199-283 (VREKIMRQLG…MLNLWVKVKG (85 aa)).

Belongs to the TRAFAC class TrmE-Era-EngA-EngB-Septin-like GTPase superfamily. Era GTPase family. Monomer.

Its subcellular location is the cytoplasm. The protein resides in the cell inner membrane. Functionally, an essential GTPase that binds both GDP and GTP, with rapid nucleotide exchange. Plays a role in 16S rRNA processing and 30S ribosomal subunit biogenesis and possibly also in cell cycle regulation and energy metabolism. This chain is GTPase Era, found in Pseudomonas syringae pv. tomato (strain ATCC BAA-871 / DC3000).